The primary structure comprises 409 residues: Endoglucanase B (409 aa).

Residues M1 to A21 form the signal peptide. Residues C23–M66 are disordered. Residues K27–S38 are compositionally biased toward basic and acidic residues. Residues V57 to M66 are compositionally biased toward polar residues. E212 functions as the Proton donor in the catalytic mechanism. The active-site Nucleophile is E332.

Belongs to the glycosyl hydrolase 5 (cellulase A) family.

The catalysed reaction is Endohydrolysis of (1-&gt;4)-beta-D-glucosidic linkages in cellulose, lichenin and cereal beta-D-glucans.. The polypeptide is Endoglucanase B (celB) (Ruminococcus albus).